Consider the following 287-residue polypeptide: MSDNTLWFEGIRFPMVGFSPELLREVRDKFLVKDEDTITVTYPKSGTNWLIEIVCLILSKGDPKWVQSVPIWDRSPWIETQHGNELMKSQKDPRIYTSHLPLHLFPKSFFSSKAKVIYCIRNPRDVLVSGYYFTSKMKIAEKPETLQQYMKWFLQGNVIYGSWFEHVRDWLSMREKENFLVLSYEELIKDTRSIVEKICQFLGKRLKPEEIDLVLKYSSFKFMKENEMSNYSLLPNDLTTEGFTFLRKGVVGDWKHHFTVAQAEEFDKIYQEKMAGYPPKLFPWEEC.

44–49 (KSGTNW) contributes to the 3'-phosphoadenylyl sulfate binding site. Tryptophan 72 and tryptophan 77 together coordinate substrate. Histidine 99 serves as the catalytic Proton acceptor. 3'-phosphoadenylyl sulfate-binding positions include arginine 121, serine 129, tyrosine 184, 218 to 223 (SSFKFM), and 247 to 249 (RKG).

This sequence belongs to the sulfotransferase 1 family. As to quaternary structure, homodimer. Liver, intestine and kidney.

Its subcellular location is the cytoplasm. The catalysed reaction is an alcohol + 3'-phosphoadenylyl sulfate = an alkyl sulfate + adenosine 3',5'-bisphosphate + H(+). Its function is as follows. Sulfotransferase that utilizes 3'-phospho-5'-adenylyl sulfate (PAPS) as sulfonate donor to catalyze the sulfonation of 3-beta-hydroxyl groups of neutral steroids. High preference for C21 steroid (pregnenolone). The polypeptide is 3-beta-hydroxysteroid sulfotransferase (STD2) (Cavia porcellus (Guinea pig)).